The sequence spans 175 residues: Peptide deformylase (175 aa).

Residues C96 and H138 each contribute to the Fe cation site. E139 is an active-site residue. H142 contacts Fe cation.

Belongs to the polypeptide deformylase family. The cofactor is Fe(2+).

The enzyme catalyses N-terminal N-formyl-L-methionyl-[peptide] + H2O = N-terminal L-methionyl-[peptide] + formate. In terms of biological role, removes the formyl group from the N-terminal Met of newly synthesized proteins. Requires at least a dipeptide for an efficient rate of reaction. N-terminal L-methionine is a prerequisite for activity but the enzyme has broad specificity at other positions. The protein is Peptide deformylase of Rhodopseudomonas palustris (strain ATCC BAA-98 / CGA009).